Here is a 148-residue protein sequence, read N- to C-terminus: Putative nickel-responsive regulator (148 aa).

Ni(2+) contacts are provided by His-88, His-99, His-101, and Cys-107.

The protein belongs to the transcriptional regulatory CopG/NikR family. Ni(2+) is required as a cofactor.

Functionally, transcriptional regulator. The protein is Putative nickel-responsive regulator of Helicobacter pylori (strain G27).